The sequence spans 419 residues: UDP-N-acetylglucosamine 1-carboxyvinyltransferase (419 aa).

22-23 (KN) lines the phosphoenolpyruvate pocket. Arginine 95 is a UDP-N-acetyl-alpha-D-glucosamine binding site. Catalysis depends on cysteine 119, which acts as the Proton donor. A 2-(S-cysteinyl)pyruvic acid O-phosphothioketal modification is found at cysteine 119. UDP-N-acetyl-alpha-D-glucosamine contacts are provided by residues 164 to 167 (KVSV), aspartate 308, and isoleucine 330.

It belongs to the EPSP synthase family. MurA subfamily.

It localises to the cytoplasm. The catalysed reaction is phosphoenolpyruvate + UDP-N-acetyl-alpha-D-glucosamine = UDP-N-acetyl-3-O-(1-carboxyvinyl)-alpha-D-glucosamine + phosphate. Its pathway is cell wall biogenesis; peptidoglycan biosynthesis. In terms of biological role, cell wall formation. Adds enolpyruvyl to UDP-N-acetylglucosamine. The chain is UDP-N-acetylglucosamine 1-carboxyvinyltransferase from Rickettsia felis (strain ATCC VR-1525 / URRWXCal2) (Rickettsia azadi).